Here is a 342-residue protein sequence, read N- to C-terminus: 29 kDa ribonucleoprotein, chloroplastic (342 aa).

Residues 1 to 65 constitute a chloroplast transit peptide; that stretch reads MSASASSLSA…PAEYPSRFVR (65 aa). The region spanning 99–177 is the RRM 1 domain; the sequence is LKLFVGNLSF…RPLRVNAGPP (79 aa). 2 positions are modified to phosphoserine: Ser107 and Ser204. Residues 167–255 form a disordered region; the sequence is GRPLRVNAGP…GSGSGSGSGS (89 aa). A linker (Gly-rich) region spans residues 178 to 256; the sequence is PPKREESFSR…SGSGSGSGSG (79 aa). 2 stretches are compositionally biased toward gly residues: residues 190–237 and 245–255; these read RSGG…GYGG and SGSGSGSGSGS. One can recognise an RRM 2 domain in the interval 257-335; the sequence is NRLYVGNLSW…RQIRVSEAEA (79 aa).

Its subcellular location is the plastid. It is found in the chloroplast. Its function is as follows. Stabilizes specific chloroplast mRNAs. Required for normal chloroplast development under cold stress conditions by stabilizing transcripts of numerous mRNAs under these conditions. The chain is 29 kDa ribonucleoprotein, chloroplastic from Arabidopsis thaliana (Mouse-ear cress).